Here is a 660-residue protein sequence, read N- to C-terminus: Glycogen debranching enzyme (660 aa).

The active-site Nucleophile is the aspartate 338. The active-site Proton donor is glutamate 373. Positions 460–472 are enriched in basic and acidic residues; that stretch reads NEANGEDNRDGAW. Residues 460-482 form a disordered region; sequence NEANGEDNRDGAWENHSNNHGYE.

This sequence belongs to the glycosyl hydrolase 13 family.

It carries out the reaction Hydrolysis of (1-&gt;6)-alpha-D-glucosidic linkages to branches with degrees of polymerization of three or four glucose residues in limit dextrin.. It participates in glycan degradation; glycogen degradation. Its function is as follows. Removes maltotriose and maltotetraose chains that are attached by 1,6-alpha-linkage to the limit dextrin main chain, generating a debranched limit dextrin. This is Glycogen debranching enzyme from Cronobacter sakazakii (strain ATCC BAA-894) (Enterobacter sakazakii).